The following is a 574-amino-acid chain: Membrane protein insertase YidC (574 aa).

Helical transmembrane passes span 6 to 26 (VFLI…WGKD), 356 to 376 (FSIM…LHSF), 380 to 400 (WGWA…PLSA), 447 to 467 (GGCL…WVLV), 489 to 509 (PYFI…KLTP), and 525 to 545 (PLVF…YWVV).

This sequence belongs to the OXA1/ALB3/YidC family. Type 1 subfamily. Interacts with the Sec translocase complex via SecD. Specifically interacts with transmembrane segments of nascent integral membrane proteins during membrane integration.

The protein localises to the cell inner membrane. In terms of biological role, required for the insertion and/or proper folding and/or complex formation of integral membrane proteins into the membrane. Involved in integration of membrane proteins that insert both dependently and independently of the Sec translocase complex, as well as at least some lipoproteins. Aids folding of multispanning membrane proteins. The chain is Membrane protein insertase YidC from Xanthomonas axonopodis pv. citri (strain 306).